Consider the following 950-residue polypeptide: Protocadherin alpha-6 (950 aa).

An N-terminal signal peptide occupies residues 1–29 (MVFTPEDRLGKQCLLLPLLLLAAWKVGSG). The Extracellular portion of the chain corresponds to 30 to 697 (QLHYSVPEEA…GPEAALVDVN (668 aa)). 6 consecutive Cadherin domains span residues 34–133 (SVPE…PPLF), 157–242 (ASDA…APNF), 243–350 (EQSE…VPEI), 351–455 (ALTS…APAF), 456–565 (AQPE…APAL), and 581–678 (VPRS…APKA). N-linked (GlcNAc...) asparagine glycans are attached at residues asparagine 257, asparagine 265, asparagine 386, and asparagine 548. A helical membrane pass occupies residues 698-718 (VYLIIAICAVSSLLVLTLLLY). Topologically, residues 719–950 (TALRCSAPST…GNSTTDNSDQ (232 aa)) are cytoplasmic. PXXP repeat units follow at residues 799 to 802 (PRQP), 832 to 835 (PGGP), 873 to 876 (PGNP), and 891 to 894 (PGSP). The tract at residues 799–894 (PRQPNPDWRY…PDKFIIPGSP (96 aa)) is 4 X 4 AA repeats of P-X-X-P. Residues 830-889 (AGPGGPDQQWPTVSSATPEPEAGEVSPPVGAGVNSNSWTFKYGPGNPKQSGPGELPDKFI) form a disordered region. The segment at 901–950 (QEPANSQIDKSDFITFGKKEETKKKKKKKKGNKTQEKKEKGNSTTDNSDQ) is disordered. The segment covering 909-923 (DKSDFITFGKKEETK) has biased composition (basic and acidic residues).

The protein resides in the cell membrane. Functionally, potential calcium-dependent cell-adhesion protein. May be involved in the establishment and maintenance of specific neuronal connections in the brain. This chain is Protocadherin alpha-6 (PCDHA6), found in Pan troglodytes (Chimpanzee).